Reading from the N-terminus, the 118-residue chain is Cell division protein FtsB (118 aa).

The Cytoplasmic portion of the chain corresponds to 1–6 (MRNWRW). A helical transmembrane segment spans residues 7–24 (LLLVLAALLSWLQHRFWF). The Periplasmic segment spans residues 25–118 (GPGNSGEVRM…DLAQPRREKR (94 aa)). A coiled-coil region spans residues 30–66 (GEVRMLQVQIVQQHQENERLRQRNASLAAEVKNLKDG). A disordered region spans residues 97–118 (PLPNDTSADHGVDLAQPRREKR). Positions 103–118 (SADHGVDLAQPRREKR) are enriched in basic and acidic residues.

Belongs to the FtsB family. As to quaternary structure, part of a complex composed of FtsB, FtsL and FtsQ.

It localises to the cell inner membrane. Essential cell division protein. May link together the upstream cell division proteins, which are predominantly cytoplasmic, with the downstream cell division proteins, which are predominantly periplasmic. This chain is Cell division protein FtsB, found in Xylella fastidiosa (strain 9a5c).